We begin with the raw amino-acid sequence, 62 residues long: MAKVCYFTGRKTVSGNNRSHAMNQTKRTVKPNLQKVTVLIDGKPKKVWVSARALKSGKVERV.

Belongs to the bacterial ribosomal protein bL28 family.

This chain is Large ribosomal subunit protein bL28, found in Streptococcus agalactiae serotype Ia (strain ATCC 27591 / A909 / CDC SS700).